The chain runs to 102 residues: Circadian clock oscillator protein KaiA (102 aa).

Residues 1–102 (MTQEVDQQIL…CEAYRGAIFK (102 aa)) form the KaiA C-terminal domain.

This sequence belongs to the KaiA family. As to quaternary structure, homodimer. The KaiABC complex composition changes during the circadian cycle to control KaiC phosphorylation. Complexes KaiC(6), KaiA(2-4):KaiC(6), KaiB(6):KaiC(6) and KaiC(6):KaiB(6):KaiA(12) are among the most important forms, many form cooperatively. KaiA and CikA bind to the same region of the KaiB(fs) form and therefore compete.

Functionally, key component of the KaiABC oscillator complex, which constitutes the main circadian regulator in cyanobacteria. Complex composition changes during the circadian cycle to control KaiC phosphorylation. KaiA stimulates KaiC autophosphorylation, while KaiB sequesters KaiA, leading to KaiC autodephosphorylation. KaiA binding to the KaiC CII domain during the subjective day yields KaiA(2-4):KaiC(6) complexes which stimulate KaiC autophosphorylation. Phospho-Ser-431 KaiC accumulation triggers binding of KaiB during the subjective night to form the KaiB(6):KaiC(6) complex, leading to changes in the output regulators CikA and SasA. KaiB(6):KaiC(6) formation exposes a site for KaiA binding on KaiB that sequesters KaiA from KaiC's CII domain, making the KaiC(6):KaiB(6):KaiA(12) complex resulting in KaiC autodephosphorylation. Complete dephosphorylation of KaiC leads to dissociation of KaiA(2):KaiB(1), completing 1 cycle of the Kai oscillator. This Nostoc sp. (strain PCC 7120 / SAG 25.82 / UTEX 2576) protein is Circadian clock oscillator protein KaiA.